A 726-amino-acid chain; its full sequence is AP-1 complex subunit beta-1 (726 aa).

Belongs to the adaptor complexes large subunit family. In terms of assembly, adaptor protein complex 1 (AP-1) is a heterotetramer composed of two large adaptins (gamma-type subunit APL4 and beta-type subunit APL2), a medium adaptin (mu-type subunit APM1) and a small adaptin (sigma-type subunit APS1). Interacts with CHC1. Interacts with APM2, probably forming an alternative AP-1-like complex.

Its subcellular location is the cell membrane. It is found in the membrane. The protein localises to the coated pit. Functionally, adaptins are components of the adaptor complexes which link clathrin to receptors in coated vesicles. Clathrin-associated protein complexes are believed to interact with the cytoplasmic tails of membrane proteins, leading to their selection and concentration. The AP-1 complex interacts directly with clathrin. The polypeptide is AP-1 complex subunit beta-1 (APL2) (Saccharomyces cerevisiae (strain ATCC 204508 / S288c) (Baker's yeast)).